Reading from the N-terminus, the 343-residue chain is Phosphoribosylformylglycinamidine cyclo-ligase (343 aa).

Belongs to the AIR synthase family.

It localises to the cytoplasm. The enzyme catalyses 2-formamido-N(1)-(5-O-phospho-beta-D-ribosyl)acetamidine + ATP = 5-amino-1-(5-phospho-beta-D-ribosyl)imidazole + ADP + phosphate + H(+). It participates in purine metabolism; IMP biosynthesis via de novo pathway; 5-amino-1-(5-phospho-D-ribosyl)imidazole from N(2)-formyl-N(1)-(5-phospho-D-ribosyl)glycinamide: step 2/2. This chain is Phosphoribosylformylglycinamidine cyclo-ligase, found in Parasynechococcus marenigrum (strain WH8102).